The chain runs to 148 residues: Endoribonuclease YbeY (148 aa).

Residues H112, H116, and H122 each contribute to the Zn(2+) site.

This sequence belongs to the endoribonuclease YbeY family. Requires Zn(2+) as cofactor.

It is found in the cytoplasm. Single strand-specific metallo-endoribonuclease involved in late-stage 70S ribosome quality control and in maturation of the 3' terminus of the 16S rRNA. This Albidiferax ferrireducens (strain ATCC BAA-621 / DSM 15236 / T118) (Rhodoferax ferrireducens) protein is Endoribonuclease YbeY.